The primary structure comprises 462 residues: Glycoprotein endo-alpha-1,2-mannosidase (462 aa).

Residues 1-9 (MAKFRRRTC) lie on the Cytoplasmic side of the membrane. The chain crosses the membrane as a helical; Signal-anchor for type II membrane protein span at residues 10-30 (ILLSLFILFIFSLMMGLKMLW). The Lumenal portion of the chain corresponds to 31-462 (PNAASFGPPF…YALDQQQPAS (432 aa)). Residues 60 to 462 (DFQRSDRINM…YALDQQQPAS (403 aa)) are catalytic.

This sequence belongs to the glycosyl hydrolase 99 family. Undergoes proteolytic cleavage in the C-terminal region.

It is found in the golgi apparatus membrane. The catalysed reaction is N-{alpha-Glc-(1-&gt;3)-alpha-Man-(1-&gt;2)-alpha-Man-(1-&gt;2)-alpha-Man-(1-&gt;3)-[alpha-Man-(1-&gt;2)-alpha-Man-(1-&gt;3)-[alpha-Man-(1-&gt;2)-alpha-Man-(1-&gt;6)]-alpha-Man-(1-&gt;6)]-beta-Man-(1-&gt;4)-beta-GlcNAc-(1-&gt;4)-beta-GlcNAc}-L-asparaginyl-[protein] + H2O = alpha-D-glucosyl-(1-&gt;3)-D-mannopyranose + N(4)-{alpha-D-Man-(1-&gt;2)-alpha-D-Man-(1-&gt;3)-[alpha-D-Man-(1-&gt;2)-alpha-D-Man-(1-&gt;3)-[alpha-D-Man-(1-&gt;2)-alpha-D-Man-(1-&gt;6)]-alpha-D-Man-(1-&gt;6)]-beta-D-Man-(1-&gt;4)-beta-D-GlaNAc-(1-&gt;4)-beta-D-GlcNAc}-L-asparaginyl-[protein] (N-glucan mannose isomer 8A1,2,3B1,2). In Mus musculus (Mouse), this protein is Glycoprotein endo-alpha-1,2-mannosidase (Manea).